The chain runs to 200 residues: Signal peptidase complex catalytic subunit SEC11 (200 aa).

Over Met1–Thr15 the chain is Cytoplasmic. The chain crosses the membrane as a helical; Signal-anchor for type II membrane protein span at residues Leu16–Trp33. At Lys34–Glu200 the chain is on the lumenal side. Asn41 is a glycosylation site (N-linked (GlcNAc...) asparagine). Residues Ser53 and His92 each act as charge relay system in the active site. Residues Gly101–Met131 form a disordered region. Basic and acidic residues predominate over residues Gly103 to Ser119. Asp142 serves as the catalytic Charge relay system. Positions Val186–Leu197 are C-terminal short (CTS) helix.

The protein belongs to the peptidase S26B family. Component of the signal peptidase complex (SPC) composed of a catalytic subunit SEC11 and three accessory subunits SPC1, SPC2 and SPC3. The complex induces a local thinning of the ER membrane which is used to measure the length of the signal peptide (SP) h-region of protein substrates. This ensures the selectivity of the complex towards h-regions shorter than 18-20 amino acids. SPC associates with the translocon complex.

It is found in the endoplasmic reticulum membrane. It catalyses the reaction Cleavage of hydrophobic, N-terminal signal or leader sequences from secreted and periplasmic proteins.. In terms of biological role, catalytic component of the signal peptidase complex (SPC) which catalyzes the cleavage of N-terminal signal sequences from nascent proteins as they are translocated into the lumen of the endoplasmic reticulum. Specifically cleaves N-terminal signal peptides that contain a hydrophobic alpha-helix (h-region) shorter than 18-20 amino acids. The sequence is that of Signal peptidase complex catalytic subunit SEC11 (SEC11) from Arthroderma gypseum (strain ATCC MYA-4604 / CBS 118893) (Microsporum gypseum).